The following is a 477-amino-acid chain: Otolin-1 (477 aa).

The N-terminal stretch at 1–23 (MWMFSWLCAILIILAIAGMNTIA) is a signal peptide. Disordered regions lie at residues 28–55 (HTKF…PEEE) and 111–337 (QKGE…KGEL). A compositionally biased stretch (basic and acidic residues) spans 33-42 (KKSEEREMPK). The region spanning 116–175 (GETGQPGPKGEAGNLGIPGPPGVVGPQGPRGYKGEKGLKGERGDQGVPGYPGKPGAQGEP) is the Collagen-like 1 domain. A hydroxyproline mark is found at P133 and P136. The span at 147–159 (YKGEKGLKGERGD) shows a compositional bias: basic and acidic residues. A hydroxyproline mark is found at P163, P166, and P169. A 5-hydroxylysine modification is found at K178. K178 carries an O-linked (Gal...) hydroxylysine glycan. The segment covering 182–191 (GNIGLGGVKG) has biased composition (gly residues). An N-linked (GlcNAc...) asparagine glycan is attached at N202. 2 consecutive Collagen-like domains span residues 209–268 (GDQG…KGSK) and 278–337 (GRNG…KGEL). Residue P223 is modified to Hydroxyproline. 2 stretches are compositionally biased toward basic and acidic residues: residues 226 to 240 (KGEK…EMGD) and 247 to 277 (SGER…EGKS). Residues P283 and P301 each carry the hydroxyproline modification. Residues 298-310 (LGPPGLLGPTGPK) are compositionally biased toward low complexity. K310 is subject to 5-hydroxylysine. Residue K310 is glycosylated (O-linked (Gal...) hydroxylysine). Residues 338 to 473 (ARVPRSAFSA…GFLLYPEETS (136 aa)) enclose the C1q domain. An N-linked (GlcNAc...) asparagine glycan is attached at N381.

This sequence belongs to the OTOL1 family. In terms of assembly, homooligomer; disulfide-linked; probably forms homotrimers. Interacts with OC90. Interacts with CBLN1.

Its subcellular location is the secreted. The protein localises to the extracellular space. The protein resides in the extracellular matrix. In terms of biological role, collagen-like protein specifically expressed in the inner ear, which provides an organic scaffold for otoconia, a calcium carbonate structure in the saccule and utricle of the ear. Acts as a scaffold for biomineralization: sequesters calcium and forms interconnecting fibrils between otoconia that are incorporated into the calcium crystal structure. Together with OC90, modulates calcite crystal morphology and growth kinetics. The polypeptide is Otolin-1 (Homo sapiens (Human)).